The sequence spans 290 residues: Glucuronoxylan 4-O-methyltransferase 2 (290 aa).

The helical transmembrane segment at 8–28 threads the bilayer; the sequence is FISSKLIFICCSILVLFILFL.

The protein belongs to the methyltransferase superfamily. As to expression, expressed in roots, rosette leaves and stems.

Its subcellular location is the golgi apparatus membrane. The enzyme catalyses glucuronoxylan D-glucuronate + n S-adenosyl-L-methionine = glucuronoxylan 4-O-methyl-D-glucuronate + n S-adenosyl-L-homocysteine + n H(+). Its function is as follows. Methyltransferase catalyzing 4-O-methylation of glucuronic acid side chains on xylan. The polypeptide is Glucuronoxylan 4-O-methyltransferase 2 (GXM2) (Arabidopsis thaliana (Mouse-ear cress)).